A 168-amino-acid chain; its full sequence is Lipoprotein signal peptidase (168 aa).

The next 4 membrane-spanning stretches (helical) occupy residues 15 to 35, 47 to 67, 75 to 95, and 107 to 127; these read WLWLAILVFIADIGIKLVVMD, VLPFFNLLYVHNYGAAFSFLS, WLFTGIAFVVTGLLTYWMSKL, and ALIIGGAVGNVFDRVVHGFVV. Active-site residues include Asp128 and Asp146. Residues 141 to 161 form a helical membrane-spanning segment; it reads AFNLADTTICIGAAMIILDGF.

Belongs to the peptidase A8 family.

It is found in the cell inner membrane. It catalyses the reaction Release of signal peptides from bacterial membrane prolipoproteins. Hydrolyzes -Xaa-Yaa-Zaa-|-(S,diacylglyceryl)Cys-, in which Xaa is hydrophobic (preferably Leu), and Yaa (Ala or Ser) and Zaa (Gly or Ala) have small, neutral side chains.. The protein operates within protein modification; lipoprotein biosynthesis (signal peptide cleavage). In terms of biological role, this protein specifically catalyzes the removal of signal peptides from prolipoproteins. The chain is Lipoprotein signal peptidase from Vibrio campbellii (strain ATCC BAA-1116).